The chain runs to 226 residues: Prolactin (226 aa).

The first 29 residues, 1-29 (MNSQGSAQKAGTLLLLLISNLLFCQNVQP), serve as a signal peptide directing secretion. C33 and C38 are disulfide-bonded. S53 and S117 each carry phosphoserine. Cystine bridges form between C85/C201 and C218/C226.

Belongs to the somatotropin/prolactin family. As to quaternary structure, interacts with PRLR.

The protein resides in the secreted. In terms of biological role, prolactin acts primarily on the mammary gland by promoting lactation. This Mus musculus (Mouse) protein is Prolactin (Prl).